Reading from the N-terminus, the 523-residue chain is Tubulin-specific chaperone E (523 aa).

Positions 31–75 (GEVSGHMGSWLGIEWDDGLRGKHNGIVDGKRYFQTQTPTGGSFIR) constitute a CAP-Gly domain. LRR repeat units follow at residues 155-180 (LTHLTTLNVSHTLIWNWEIVASIAQQ), 181-204 (LPSLTNLNLSSNRLVLPTSSQITE), 209-232 (FRQLKRINLRSCGFSDWKDVMHTA), 235-258 (WPNILSLGLQENSLGQLAEVDRTK), 260-284 (FKQLHELDLHRTNIMDFDQVTKLGN), 285-310 (LTTLRLLNIMENGIEEIKLPDCDSQE), and 315-337 (FVSLEQLNLLHNPIWNEADAFNE).

The protein belongs to the TBCE family.

It is found in the cytoplasm. Functionally, tubulin-folding protein which is required for the development of the neuronal microtubule network. Essential for the development and function of neuromuscular synapses. Likely to promote microtubule formation by acting in the negative regulation of the microtubule-severing protein spas. The protein is Tubulin-specific chaperone E of Drosophila melanogaster (Fruit fly).